The chain runs to 655 residues: uncharacterized protein (655 aa).

Positions 1–23 (MKRTIKYLSFLGLIPFLSITTIS) are cleaved as a signal peptide. Cysteine 24 carries the N-palmitoyl cysteine lipid modification. Cysteine 24 carries S-diacylglycerol cysteine lipidation.

It belongs to the MG067/MG068/MG395 family.

It localises to the cell membrane. This is an uncharacterized protein from Mycoplasma capricolum subsp. capricolum (strain California kid / ATCC 27343 / NCTC 10154).